The chain runs to 338 residues: Ketol-acid reductoisomerase (NADP(+)) (338 aa).

Residues 1–181 (MKVFYDKDCD…GGGRTGIIET (181 aa)) form the KARI N-terminal Rossmann domain. Residues 24 to 27 (YGSQ), Arg-47, Ser-50, Thr-52, and 82 to 85 (DEFQ) contribute to the NADP(+) site. His-107 is a catalytic residue. Position 133 (Gly-133) interacts with NADP(+). The KARI C-terminal knotted domain maps to 182–327 (TFKDETETDL…EKLRSMMPWI (146 aa)). 4 residues coordinate Mg(2+): Asp-190, Glu-194, Glu-226, and Glu-230. Ser-251 contributes to the substrate binding site.

It belongs to the ketol-acid reductoisomerase family. Mg(2+) serves as cofactor.

It catalyses the reaction (2R)-2,3-dihydroxy-3-methylbutanoate + NADP(+) = (2S)-2-acetolactate + NADPH + H(+). The catalysed reaction is (2R,3R)-2,3-dihydroxy-3-methylpentanoate + NADP(+) = (S)-2-ethyl-2-hydroxy-3-oxobutanoate + NADPH + H(+). Its pathway is amino-acid biosynthesis; L-isoleucine biosynthesis; L-isoleucine from 2-oxobutanoate: step 2/4. It participates in amino-acid biosynthesis; L-valine biosynthesis; L-valine from pyruvate: step 2/4. In terms of biological role, involved in the biosynthesis of branched-chain amino acids (BCAA). Catalyzes an alkyl-migration followed by a ketol-acid reduction of (S)-2-acetolactate (S2AL) to yield (R)-2,3-dihydroxy-isovalerate. In the isomerase reaction, S2AL is rearranged via a Mg-dependent methyl migration to produce 3-hydroxy-3-methyl-2-ketobutyrate (HMKB). In the reductase reaction, this 2-ketoacid undergoes a metal-dependent reduction by NADPH to yield (R)-2,3-dihydroxy-isovalerate. The sequence is that of Ketol-acid reductoisomerase (NADP(+)) from Pseudomonas syringae pv. tomato (strain ATCC BAA-871 / DC3000).